Reading from the N-terminus, the 353-residue chain is Photosystem II protein D1 (353 aa).

T2 bears the N-acetylthreonine mark. Phosphothreonine is present on T2. Transmembrane regions (helical) follow at residues 29-46 (YIGW…TATS), 118-133 (HFLL…EWEL), and 142-156 (WIAV…AATA). H118 contributes to the chlorophyll a binding site. Y126 lines the pheophytin a pocket. [CaMn4O5] cluster is bound by residues D170 and E189. The helical transmembrane segment at 197–218 (FHMLGVAGVFGGSLFSAMHGSL) threads the bilayer. H198 contributes to the chlorophyll a binding site. A quinone-binding positions include H215 and 264–265 (SF). H215 is a Fe cation binding site. H272 contacts Fe cation. A helical membrane pass occupies residues 274–288 (FLAAWPVVGIWFTAL). The [CaMn4O5] cluster site is built by H332, E333, D342, and A344. Residues 345 to 353 (AVEVPSTNG) constitute a propeptide that is removed on maturation.

It belongs to the reaction center PufL/M/PsbA/D family. As to quaternary structure, PSII is composed of 1 copy each of membrane proteins PsbA, PsbB, PsbC, PsbD, PsbE, PsbF, PsbH, PsbI, PsbJ, PsbK, PsbL, PsbM, PsbT, PsbX, PsbY, PsbZ, Psb30/Ycf12, at least 3 peripheral proteins of the oxygen-evolving complex and a large number of cofactors. It forms dimeric complexes. The D1/D2 heterodimer binds P680, chlorophylls that are the primary electron donor of PSII, and subsequent electron acceptors. It shares a non-heme iron and each subunit binds pheophytin, quinone, additional chlorophylls, carotenoids and lipids. D1 provides most of the ligands for the Mn4-Ca-O5 cluster of the oxygen-evolving complex (OEC). There is also a Cl(-1) ion associated with D1 and D2, which is required for oxygen evolution. The PSII complex binds additional chlorophylls, carotenoids and specific lipids. serves as cofactor. In terms of processing, tyr-161 forms a radical intermediate that is referred to as redox-active TyrZ, YZ or Y-Z. C-terminally processed by CTPA; processing is essential to allow assembly of the oxygen-evolving complex and thus photosynthetic growth.

It localises to the plastid. Its subcellular location is the chloroplast thylakoid membrane. It carries out the reaction 2 a plastoquinone + 4 hnu + 2 H2O = 2 a plastoquinol + O2. Its function is as follows. Photosystem II (PSII) is a light-driven water:plastoquinone oxidoreductase that uses light energy to abstract electrons from H(2)O, generating O(2) and a proton gradient subsequently used for ATP formation. It consists of a core antenna complex that captures photons, and an electron transfer chain that converts photonic excitation into a charge separation. The D1/D2 (PsbA/PsbD) reaction center heterodimer binds P680, the primary electron donor of PSII as well as several subsequent electron acceptors. This Eucalyptus globulus subsp. globulus (Tasmanian blue gum) protein is Photosystem II protein D1.